The chain runs to 465 residues: uncharacterized protein (465 aa).

Disordered regions lie at residues 1–55, 70–164, and 221–313; these read MNSS…SSHQ, DFSE…VEGQ, and TTDN…KQRV. A compositionally biased stretch (basic and acidic residues) spans 40-50; sequence ENYKDNSDHSN. Over residues 73–82 the composition is skewed to polar residues; sequence ESFNDNQNLK. The segment covering 83–134 has biased composition (low complexity); it reads NFNTTDNNFNDDYNNDYDSNNDSNNDSNNDSNNDYDNESNNYFNNDSNNDSN. A compositionally biased stretch (basic and acidic residues) spans 141–150; sequence ETTKHKLPIE. A compositionally biased stretch (low complexity) spans 221-235; that stretch reads TTDNQSNTESSQENN. 2 stretches are compositionally biased toward basic and acidic residues: residues 236–249 and 259–275; these read VIKK…DKQP and IVPK…KSIK. The segment covering 288–306 has biased composition (polar residues); the sequence is IDQSNKLGKSYNTNNNNSK. Positions 390–423 form a coiled coil; sequence NKASIAELKKMRLEQRKREIEEKRRQVENKKPDS.

This is an uncharacterized protein from Acanthamoeba polyphaga mimivirus (APMV).